Reading from the N-terminus, the 330-residue chain is Cytosolic iron-sulfur protein assembly protein 1 (330 aa).

7 WD repeats span residues 12 to 53 (LYKE…DVLD), 56 to 95 (AHKK…DRTF), 105 to 144 (GHEN…EEYE), 151 to 190 (EHSQ…WECV), 195 to 236 (GHEG…EDDQ), 248 to 286 (VHKR…WKVF), and 292 to 330 (CHGV…EKAA).

This sequence belongs to the WD repeat CIA1 family. As to quaternary structure, interacts with NAR1.

Its subcellular location is the cytoplasm. The protein localises to the nucleus. Functionally, essential component of the cytosolic iron-sulfur (Fe/S) protein assembly machinery. Required for the maturation of extramitochondrial Fe/S proteins. This is Cytosolic iron-sulfur protein assembly protein 1 from Saccharomyces cerevisiae (strain ATCC 204508 / S288c) (Baker's yeast).